The chain runs to 661 residues: PAN2-PAN3 deadenylation complex subunit PAN3 (661 aa).

Disordered stretches follow at residues 1–26 and 53–130; these read MASA…AREN and DPHK…LRQD. A C3H1-type zinc finger spans residues 26-55; the sequence is NAKDTLCRNITIYGRCRYEDKGCAFNHDPH. Positions 75-102 are enriched in low complexity; sequence SFTPSLLSSNGSSPTSTPATTKKMTTIS. Polar residues predominate over residues 115-130; it reads SVVSRSNASTPGLRQD. Residues 263–524 form a pseudokinase domain region; sequence QTLPNTQLPA…NIDIFITGIS (262 aa). ATP-binding positions include Arg315, 364-371, and 424-425; these read DYHPLSKT and SK. The stretch at 525-563 forms a coiled coil; sequence SQLMSTFDSALHLDDQLTSDLSRELENGRLVRLMTKLNF. The tract at residues 564–661 is knob domain; the sequence is VNERPEYEHD…ALMKPARRMH (98 aa).

It belongs to the protein kinase superfamily. PAN3 family. In terms of assembly, homodimer. Forms a heterotrimer with a catalytic subunit pan2 to form the poly(A)-nuclease (PAN) deadenylation complex. Interacts (via PAM-2 motif) with poly(A)-binding protein pab1 (via PABC domain), conferring substrate specificity of the enzyme complex.

Its subcellular location is the cytoplasm. Functionally, regulatory subunit of the poly(A)-nuclease (PAN) deadenylation complex, one of two cytoplasmic mRNA deadenylases involved in mRNA turnover. PAN specifically shortens poly(A) tails of RNA and the activity is stimulated by poly(A)-binding protein pab1. PAN deadenylation is followed by rapid degradation of the shortened mRNA tails by the CCR4-NOT complex. Deadenylated mRNAs are then degraded by two alternative mechanisms, namely exosome-mediated 3'-5' exonucleolytic degradation, or deadenylation-dependent mRNA decaping and subsequent 5'-3' exonucleolytic degradation by xrn1. May also be involved in post-transcriptional maturation of mRNA poly(A) tails. pan3 acts as a positive regulator for PAN activity, recruiting the catalytic subunit pan2 to mRNA via its interaction with RNA and with pab1. The protein is PAN2-PAN3 deadenylation complex subunit PAN3 of Neosartorya fischeri (strain ATCC 1020 / DSM 3700 / CBS 544.65 / FGSC A1164 / JCM 1740 / NRRL 181 / WB 181) (Aspergillus fischerianus).